Consider the following 315-residue polypeptide: Protoheme IX farnesyltransferase (315 aa).

Helical transmembrane passes span 34-54, 55-75, 105-125, 127-147, 155-175, 177-197, 226-246, 251-271, and 294-314; these read VISL…GPIN, PLIA…AGAI, ALGF…LAAN, LAAF…TMWL, IVIG…ATTG, LGVL…PHFW, WQIL…SFLH, LYTG…VGVL, and YSLA…FLIM.

This sequence belongs to the UbiA prenyltransferase family. Protoheme IX farnesyltransferase subfamily.

The protein resides in the cell inner membrane. The catalysed reaction is heme b + (2E,6E)-farnesyl diphosphate + H2O = Fe(II)-heme o + diphosphate. It functions in the pathway porphyrin-containing compound metabolism; heme O biosynthesis; heme O from protoheme: step 1/1. Functionally, converts heme B (protoheme IX) to heme O by substitution of the vinyl group on carbon 2 of heme B porphyrin ring with a hydroxyethyl farnesyl side group. In Gluconacetobacter diazotrophicus (strain ATCC 49037 / DSM 5601 / CCUG 37298 / CIP 103539 / LMG 7603 / PAl5), this protein is Protoheme IX farnesyltransferase.